Consider the following 476-residue polypeptide: 3-isopropylmalate dehydratase large subunit (476 aa).

3 residues coordinate [4Fe-4S] cluster: Cys-355, Cys-416, and Cys-419.

Belongs to the aconitase/IPM isomerase family. LeuC type 1 subfamily. As to quaternary structure, heterodimer of LeuC and LeuD. The cofactor is [4Fe-4S] cluster.

The catalysed reaction is (2R,3S)-3-isopropylmalate = (2S)-2-isopropylmalate. Its pathway is amino-acid biosynthesis; L-leucine biosynthesis; L-leucine from 3-methyl-2-oxobutanoate: step 2/4. Functionally, catalyzes the isomerization between 2-isopropylmalate and 3-isopropylmalate, via the formation of 2-isopropylmaleate. The chain is 3-isopropylmalate dehydratase large subunit from Sphingopyxis alaskensis (strain DSM 13593 / LMG 18877 / RB2256) (Sphingomonas alaskensis).